A 414-amino-acid polypeptide reads, in one-letter code: Probable sugar-binding periplasmic protein (414 aa).

An N-terminal signal peptide occupies residues 1–22 (MRKFMTTTAVAALMLAATAARA).

It belongs to the bacterial solute-binding protein 1 family.

The protein localises to the periplasm. Part of a binding-protein-dependent transport system for a sugar. This Rhizobium meliloti (strain 1021) (Ensifer meliloti) protein is Probable sugar-binding periplasmic protein.